Here is a 490-residue protein sequence, read N- to C-terminus: Glutamyl-tRNA(Gln) amidotransferase subunit A (490 aa).

Catalysis depends on charge relay system residues lysine 78 and serine 153. Serine 177 (acyl-ester intermediate) is an active-site residue.

This sequence belongs to the amidase family. GatA subfamily. Heterotrimer of A, B and C subunits.

The enzyme catalyses L-glutamyl-tRNA(Gln) + L-glutamine + ATP + H2O = L-glutaminyl-tRNA(Gln) + L-glutamate + ADP + phosphate + H(+). Allows the formation of correctly charged Gln-tRNA(Gln) through the transamidation of misacylated Glu-tRNA(Gln) in organisms which lack glutaminyl-tRNA synthetase. The reaction takes place in the presence of glutamine and ATP through an activated gamma-phospho-Glu-tRNA(Gln). The polypeptide is Glutamyl-tRNA(Gln) amidotransferase subunit A (Bdellovibrio bacteriovorus (strain ATCC 15356 / DSM 50701 / NCIMB 9529 / HD100)).